The sequence spans 452 residues: C4-dicarboxylate transport protein 1 (452 aa).

A run of 9 helical transmembrane segments spans residues Phe18–Gly38, Leu51–Met71, Leu83–Val103, Ala151–Leu171, Val191–Met211, Leu229–Ala249, Gly304–Ala324, Ile337–Gly357, and Ile359–Ile379. Residues Trp426–Gly452 are disordered. Residues Glu431 to His442 are compositionally biased toward basic and acidic residues.

This sequence belongs to the dicarboxylate/amino acid:cation symporter (DAACS) (TC 2.A.23) family.

It localises to the cell inner membrane. Functionally, responsible for the transport of dicarboxylates such as succinate, fumarate, and malate from the periplasm across the membrane. The chain is C4-dicarboxylate transport protein 1 from Polaromonas naphthalenivorans (strain CJ2).